Consider the following 353-residue polypeptide: Glucose import ATP-binding protein GlcV (353 aa).

The 238-residue stretch at 4 to 241 folds into the ABC transporter domain; the sequence is IIVKNVSKVF…PVSIQVASLI (238 aa). Residues 40–46, Gln89, and Glu166 contribute to the ATP site; that span reads SGAGKTT.

It belongs to the ABC transporter superfamily. In terms of assembly, the complex is composed of two ATP-binding proteins (GlcV), two transmembrane proteins (GlcT and GlcU) and a solute-binding protein (GlcS). Forms transient head-to-tail homodimers in the presence of ATP-Mg(2+).

The protein resides in the cell membrane. It carries out the reaction D-glucose(out) + ATP + H2O = D-glucose(in) + ADP + phosphate + H(+). In terms of biological role, part of the ABC transporter complex GlcSTUV involved in glucose uptake. Responsible for energy coupling to the transport system. In vitro, as a free subunit, exhibits a constitutive ATPase activity. This Saccharolobus solfataricus (strain ATCC 35092 / DSM 1617 / JCM 11322 / P2) (Sulfolobus solfataricus) protein is Glucose import ATP-binding protein GlcV.